The sequence spans 423 residues: Acetylornithine aminotransferase, mitochondrial (423 aa).

An N6-(pyridoxal phosphate)lysine modification is found at lysine 276.

This sequence belongs to the class-III pyridoxal-phosphate-dependent aminotransferase family. Pyridoxal 5'-phosphate is required as a cofactor.

The protein resides in the mitochondrion matrix. The enzyme catalyses N(2)-acetyl-L-ornithine + 2-oxoglutarate = N-acetyl-L-glutamate 5-semialdehyde + L-glutamate. It functions in the pathway amino-acid biosynthesis; L-arginine biosynthesis; N(2)-acetyl-L-ornithine from L-glutamate: step 4/4. The sequence is that of Acetylornithine aminotransferase, mitochondrial (ARG8) from Eremothecium gossypii (strain ATCC 10895 / CBS 109.51 / FGSC 9923 / NRRL Y-1056) (Yeast).